The primary structure comprises 422 residues: Calpain-2 catalytic subunit (422 aa).

A Calpain catalytic domain is found at 1 to 66; the sequence is QKLIRIRNPW…YSRLEICNLT (66 aa). Asn-8 is an active-site residue. Ca(2+) contacts are provided by Glu-14, Asp-21, and Glu-45. The interval 67–236 is domain III; the sequence is PDTLTSDTYK…KKADYQAVDD (170 aa). Positions 237–251 are linker; it reads EIEADLEEADVSEDD. The domain IV stretch occupies residues 252–422; the sequence is IDDGFRRLFA…LISWLCFSVL (171 aa). Residues Ala-264, Asp-267, Glu-269, Glu-274, Asp-307, Asp-309, Thr-311, Lys-313, Glu-318, Asp-337, Asp-339, Ser-341, Thr-343, Glu-348, Asp-380, and Asn-383 each coordinate Ca(2+). 2 consecutive EF-hand domains span residues 294-327 and 324-359; these read LSIE…TKIQ and TKIQ…AGFK. The 34-residue stretch at 389–422 folds into the EF-hand 3 domain; sequence VRLETLFKIFKQLDPDNTGMIQLDLISWLCFSVL.

It belongs to the peptidase C2 family. As to quaternary structure, forms a heterodimer with a small (regulatory) subunit (CAPNS1). Interacts with CPEB3; this leads to cleavage of CPEB3. The cofactor is Ca(2+). Ubiquitous.

It is found in the cytoplasm. The protein localises to the cell membrane. The catalysed reaction is Broad endopeptidase specificity.. Activated by 200-1000 micromolar concentrations of calcium and inhibited by calpastatin. In terms of biological role, calcium-regulated non-lysosomal thiol-protease which catalyzes limited proteolysis of substrates involved in cytoskeletal remodeling and signal transduction. Proteolytically cleaves MYOC at 'Arg-226'. Proteolytically cleaves CPEB3 following neuronal stimulation which abolishes CPEB3 translational repressor activity, leading to translation of CPEB3 target mRNAs. The chain is Calpain-2 catalytic subunit (CAPN2) from Oryctolagus cuniculus (Rabbit).